We begin with the raw amino-acid sequence, 65 residues long: Muscarinic toxin-like protein 1 (65 aa).

4 disulfides stabilise this stretch: Cys-3–Cys-24, Cys-17–Cys-42, Cys-46–Cys-57, and Cys-58–Cys-63.

Belongs to the three-finger toxin family. Short-chain subfamily. Type C muscarinic toxin sub-subfamily. As to quaternary structure, monomer. In terms of tissue distribution, expressed by the venom gland.

The protein localises to the secreted. Binds weakly to the muscarinic acetylcholine receptor (CHRM). The polypeptide is Muscarinic toxin-like protein 1 (Naja kaouthia (Monocled cobra)).